A 303-amino-acid chain; its full sequence is Porphobilinogen deaminase (303 aa).

C241 is subject to S-(dipyrrolylmethanemethyl)cysteine.

This sequence belongs to the HMBS family. Monomer. Dipyrromethane serves as cofactor.

The enzyme catalyses 4 porphobilinogen + H2O = hydroxymethylbilane + 4 NH4(+). The protein operates within porphyrin-containing compound metabolism; protoporphyrin-IX biosynthesis; coproporphyrinogen-III from 5-aminolevulinate: step 2/4. It functions in the pathway porphyrin-containing compound metabolism; chlorophyll biosynthesis. Functionally, tetrapolymerization of the monopyrrole PBG into the hydroxymethylbilane pre-uroporphyrinogen in several discrete steps. The polypeptide is Porphobilinogen deaminase (Roseiflexus sp. (strain RS-1)).